The chain runs to 143 residues: Ribosome maturation factor RimP (143 aa).

It belongs to the RimP family.

The protein resides in the cytoplasm. In terms of biological role, required for maturation of 30S ribosomal subunits. The chain is Ribosome maturation factor RimP from Borrelia hermsii (strain HS1 / DAH).